The primary structure comprises 372 residues: GDP-mannose 4,6-dehydratase (372 aa).

Residues 9–14 (GVTGQD), 64–65 (DL), 86–90 (LGAQS), and tyrosine 101 contribute to the NADP(+) site. Threonine 133 is an active-site residue. Residues glutamate 135 and tyrosine 157 each act as nucleophile in the active site. Lysine 161, histidine 187, and arginine 192 together coordinate NADP(+).

Belongs to the NAD(P)-dependent epimerase/dehydratase family. GDP-mannose 4,6-dehydratase subfamily. It depends on NADP(+) as a cofactor.

The enzyme catalyses GDP-alpha-D-mannose = GDP-4-dehydro-alpha-D-rhamnose + H2O. Its pathway is nucleotide-sugar biosynthesis; GDP-L-fucose biosynthesis via de novo pathway; GDP-L-fucose from GDP-alpha-D-mannose: step 1/2. Catalyzes the conversion of GDP-D-mannose to GDP-4-dehydro-6-deoxy-D-mannose. The protein is GDP-mannose 4,6-dehydratase of Vibrio cholerae.